We begin with the raw amino-acid sequence, 545 residues long: GPI transamidase component PIG-T homolog (545 aa).

Residues 1 to 22 (MKKNGCLLLFAYSLLSFSLTAA) form the signal peptide. The Lumenal portion of the chain corresponds to 23–493 (TIDETYDESL…PTPDFSMPYN (471 aa)). Residues asparagine 168, asparagine 227, asparagine 336, asparagine 391, and asparagine 467 are each glycosylated (N-linked (GlcNAc...) asparagine). The helical transmembrane segment at 494 to 514 (VIIFTSTVIALTFGGIFNLLT) threads the bilayer. Residues 515–545 (RRFVPQQSKFQNRQPSMLQRLKEKIFHKKRG) are Cytoplasmic-facing.

The protein belongs to the PIGT family. Forms a complex with PIG-S homolog, PIG-U homolog and GPI8. The disulfide bond between PIGK/GPI8 and PIGT is important for normal enzyme activity.

The protein localises to the endoplasmic reticulum membrane. It functions in the pathway glycolipid biosynthesis; glycosylphosphatidylinositol-anchor biosynthesis. Its function is as follows. Component of the GPI transamidase complex. Involved in transfer of GPI to proteins. The polypeptide is GPI transamidase component PIG-T homolog (gpi16) (Schizosaccharomyces pombe (strain 972 / ATCC 24843) (Fission yeast)).